A 364-amino-acid polypeptide reads, in one-letter code: Aminomethyltransferase (364 aa).

Belongs to the GcvT family. The glycine cleavage system is composed of four proteins: P, T, L and H.

The enzyme catalyses N(6)-[(R)-S(8)-aminomethyldihydrolipoyl]-L-lysyl-[protein] + (6S)-5,6,7,8-tetrahydrofolate = N(6)-[(R)-dihydrolipoyl]-L-lysyl-[protein] + (6R)-5,10-methylene-5,6,7,8-tetrahydrofolate + NH4(+). Its function is as follows. The glycine cleavage system catalyzes the degradation of glycine. This chain is Aminomethyltransferase, found in Shewanella piezotolerans (strain WP3 / JCM 13877).